Consider the following 281-residue polypeptide: UPF0046 protein C25E10.12 (281 aa).

This sequence belongs to the UPF0046 family.

The sequence is that of UPF0046 protein C25E10.12 from Caenorhabditis elegans.